The sequence spans 243 residues: ATP-dependent dethiobiotin synthetase BioD (243 aa).

Residue 12–17 (DVGKTF) coordinates ATP. Thr16 is a Mg(2+) binding site. The active site involves Lys37. Ser41 is a binding site for substrate. Residues Asp54, 115-118 (EGCG), and 179-180 (NM) contribute to the ATP site. Mg(2+) is bound by residues Asp54 and Glu115.

Belongs to the dethiobiotin synthetase family. In terms of assembly, homodimer. Mg(2+) is required as a cofactor.

The protein localises to the cytoplasm. The catalysed reaction is (7R,8S)-7,8-diammoniononanoate + CO2 + ATP = (4R,5S)-dethiobiotin + ADP + phosphate + 3 H(+). It functions in the pathway cofactor biosynthesis; biotin biosynthesis; biotin from 7,8-diaminononanoate: step 1/2. Its function is as follows. Catalyzes a mechanistically unusual reaction, the ATP-dependent insertion of CO2 between the N7 and N8 nitrogen atoms of 7,8-diaminopelargonic acid (DAPA, also called 7,8-diammoniononanoate) to form a ureido ring. This is ATP-dependent dethiobiotin synthetase BioD from Caldicellulosiruptor bescii (strain ATCC BAA-1888 / DSM 6725 / KCTC 15123 / Z-1320) (Anaerocellum thermophilum).